A 240-amino-acid chain; its full sequence is Ribitol-5-phosphate cytidylyltransferase (240 aa).

CTP is bound by residues 8-11 and 81-87; these read FAGG and GETGQMS.

Belongs to the IspD/TarI cytidylyltransferase family. TarI subfamily.

It carries out the reaction D-ribitol 5-phosphate + CTP + H(+) = CDP-L-ribitol + diphosphate. It participates in cell wall biogenesis; poly(ribitol phosphate) teichoic acid biosynthesis. In terms of biological role, catalyzes the transfer of the cytidylyl group of CTP to D-ribitol 5-phosphate. This is Ribitol-5-phosphate cytidylyltransferase from Streptococcus agalactiae serotype V (strain ATCC BAA-611 / 2603 V/R).